The following is a 286-amino-acid chain: Plasma membrane ascorbate-dependent reductase CYBRD1 (286 aa).

The Cytoplasmic segment spans residues 1–7 (MAMEGYR). A helical transmembrane segment spans residues 8-32 (GFLGLLVSALLVGFLSVIFVLIWVL). In terms of domain architecture, Cytochrome b561 spans 15 to 220 (SALLVGFLSV…FGALIFWIVT (206 aa)). The Extracellular segment spans residues 33–47 (HFREGLGWDGGALEF). The chain crosses the membrane as a helical span at residues 48 to 69 (NWHPVLAVTGFVFIQGIAIIVY). Residues H50, R70, and K79 each contribute to the heme b site. The Cytoplasmic segment spans residues 70–78 (RLPWTWKCS). 2 residues coordinate L-ascorbate: K79 and K83. The chain crosses the membrane as a helical span at residues 79 to 105 (KFLMKSIHAGLNAVAAILAIISVVAVF). H86 lines the heme b pocket. The Extracellular segment spans residues 106–118 (DYHNVRKIPHMYS). H108 contributes to the Fe(3+) binding site. Residues 115 to 118 (HMYS) and H120 each bind heme b. The chain crosses the membrane as a helical span at residues 119–144 (LHSWVGLTVLILYIQQLVVGFFIFLL). Topologically, residues 145-151 (PWAPPSL) are cytoplasmic. Residue R152 participates in L-ascorbate binding. A helical transmembrane segment spans residues 152-179 (RAIVMPIHVYSGLLLFGTVIATVLMGVT). Residues H159 and E180 each coordinate heme b. Residues 180–197 (EKLFFVLKNPSYHSFPPE) are Extracellular-facing. Residues 198–222 (GVFTNTLGLLILVFGALIFWIVTRP) traverse the membrane as a helical segment. Over 223-286 (QWKRPREPGS…LVDTGQRSTM (64 aa)) the chain is Cytoplasmic. Heme b is bound at residue K225. Residue S232 is modified to Phosphoserine. T285 bears the Phosphothreonine mark.

As to quaternary structure, homodimer. The cofactor is heme b. In terms of tissue distribution, highly expressed in all regions of the small intestine and colon studied in suckling animals. However, after weaning, when iron absorption declines significantly, strong expression is retained only in the duodenum. Also expressed in respiratory epithelium.

It localises to the cell membrane. Its subcellular location is the apical cell membrane. The enzyme catalyses Fe(3+)(out) + L-ascorbate(in) = monodehydro-L-ascorbate radical(in) + Fe(2+)(out) + H(+). It carries out the reaction Cu(2+)(out) + L-ascorbate(in) = Cu(+)(out) + monodehydro-L-ascorbate radical(in) + H(+). The catalysed reaction is monodehydro-L-ascorbate radical(out) + L-ascorbate(in) = monodehydro-L-ascorbate radical(in) + L-ascorbate(out). In terms of biological role, plasma membrane reductase that uses cytoplasmic ascorbate as an electron donor to reduce extracellular Fe(3+) into Fe(2+). Probably functions in dietary iron absorption at the brush border of duodenal enterocytes by producing Fe(2+), the divalent form of iron that can be transported into enterocytes. It is also able to reduce extracellular monodehydro-L-ascorbate and may be involved in extracellular ascorbate regeneration by erythrocytes in blood. May also act as a ferrireductase in airway epithelial cells. May also function as a cupric transmembrane reductase. In Rattus norvegicus (Rat), this protein is Plasma membrane ascorbate-dependent reductase CYBRD1.